A 347-amino-acid polypeptide reads, in one-letter code: Protein phosphatase 2C homolog 1 (347 aa).

A disordered region spans residues 1-41 (MKGSHPNAGSLLEPLHKLNPFSENSTSGHRKNASDHSADGE). Positions 32-41 (NASDHSADGE) are enriched in basic and acidic residues. A PPM-type phosphatase domain is found at 71-323 (LAGLMEDKNQ…DNITCIVVNL (253 aa)). Residues Asp-109, Gly-110, Asp-275, and Asp-314 each coordinate Mn(2+).

The protein belongs to the PP2C family. Monomer. The cofactor is Mg(2+). Requires Mn(2+) as cofactor.

The enzyme catalyses O-phospho-L-seryl-[protein] + H2O = L-seryl-[protein] + phosphate. It carries out the reaction O-phospho-L-threonyl-[protein] + H2O = L-threonyl-[protein] + phosphate. Serine and threonine phosphatase. Has a specialized role in the heat shock response. May be responsible for the dephosphorylation of hsp90. The protein is Protein phosphatase 2C homolog 1 (ptc1) of Schizosaccharomyces pombe (strain 972 / ATCC 24843) (Fission yeast).